The chain runs to 339 residues: Isopentenyl-diphosphate delta-isomerase (339 aa).

7–8 (RK) contacts substrate. FMN-binding positions include Ser65, 66 to 68 (SMT), Ser96, and Asn125. Substrate is bound at residue 96 to 98 (SQR). Gln160 serves as a coordination point for substrate. Position 161 (Glu161) interacts with Mg(2+). FMN is bound by residues Lys192, Thr222, and 293 to 294 (AG).

The protein belongs to the IPP isomerase type 2 family. In terms of assembly, homooctamer. Dimer of tetramers. Requires FMN as cofactor. The cofactor is NADPH. Mg(2+) is required as a cofactor.

The protein resides in the cytoplasm. It carries out the reaction isopentenyl diphosphate = dimethylallyl diphosphate. In terms of biological role, involved in the biosynthesis of isoprenoids. Catalyzes the 1,3-allylic rearrangement of the homoallylic substrate isopentenyl (IPP) to its allylic isomer, dimethylallyl diphosphate (DMAPP). The polypeptide is Isopentenyl-diphosphate delta-isomerase (Vibrio campbellii (strain ATCC BAA-1116)).